A 236-amino-acid chain; its full sequence is Small ribosomal subunit protein uS2c (236 aa).

The protein belongs to the universal ribosomal protein uS2 family.

It is found in the plastid. The protein resides in the chloroplast. The chain is Small ribosomal subunit protein uS2c (rps2) from Gossypium barbadense (Sea Island cotton).